The sequence spans 126 residues: Methylglyoxal synthase (126 aa).

One can recognise an MGS-like domain in the interval Met1–Glu126. Substrate is bound by residues His12, Lys16, Thr38–Thr41, and Ser59–Gly60. Residue Asp65 is the Proton donor/acceptor of the active site. His92 lines the substrate pocket.

It belongs to the methylglyoxal synthase family.

It catalyses the reaction dihydroxyacetone phosphate = methylglyoxal + phosphate. Functionally, catalyzes the formation of methylglyoxal from dihydroxyacetone phosphate. This chain is Methylglyoxal synthase, found in Allorhizobium ampelinum (strain ATCC BAA-846 / DSM 112012 / S4) (Agrobacterium vitis (strain S4)).